The following is a 433-amino-acid chain: Nuclear distribution protein PAC1 (433 aa).

The LisH domain maps to 8-40 (QKDELHRAMLAYLHAAGMHNAYAALQHDAALAD). Residues 57-84 (SVIRLQKKVIDLENRNAALLAELAAAAR) are a coiled coil. WD repeat units follow at residues 103-144 (SHRA…RTLK), 146-184 (HTKA…TNVK), 188-227 (GHDH…CIKT), 230-269 (GHAE…TKME), 272-336 (GHEH…CLRT), 339-378 (GHDN…CTKT), and 381-429 (AHSH…QTIK).

This sequence belongs to the WD repeat LIS1/nudF family. Self-associates. Interacts with NDL1 and dynein.

It is found in the cytoplasm. It localises to the cytoskeleton. The protein resides in the spindle pole. Its function is as follows. Positively regulates the activity of the minus-end directed microtubule motor protein dynein. Plays a central role in positioning the mitotic spindle at the bud neck during cell division. Targets cytoplasmic dynein to microtubule plus ends, thereby promoting dynein-mediated microtubule sliding along the bud cortex and consequently the movement of the mitotic spindle to the bud neck. The chain is Nuclear distribution protein PAC1 from Cryptococcus neoformans var. neoformans serotype D (strain B-3501A) (Filobasidiella neoformans).